Here is a 135-residue protein sequence, read N- to C-terminus: Transcriptional activator protein (135 aa).

Positions 17-32 match the Nuclear localization signal motif; the sequence is KIQHHIAKKRQVRRRR. A zinc finger lies at 37–54; sequence CGCSYYIHLDCINHGFTH. The tract at residues 120 to 135 is transactivation; that stretch reads HLDDLTVSDWSFFKSL.

This sequence belongs to the geminiviridae transcriptional activator protein family. As to quaternary structure, monomer. Homodimer. Homooligomer. Self-interaction correlates with nuclear localization and efficient activation of transcription. Monomers suppress local silencing by interacting with and inactivating host adenosine kinase 2 (ADK2) in the cytoplasm. Interacts with and inhibits host SNF1 kinase. Binds to ssDNA. May interact with host RPS27A. In terms of processing, phosphorylated.

It localises to the host nucleus. The protein resides in the host cytoplasm. In terms of biological role, multifunctional protein that modulates host antiviral defenses and promotes host attractiveness to insect vectors. Acts as a suppressor of RNA-mediated gene silencing, also known as post-transcriptional gene silencing (PTGS), a mechanism of plant viral defense that limits the accumulation of viral RNAs. TrAP suppresses the host RNA silencing by inhibiting adenosine kinase 2 (ADK2), a kinase involved in a general methylation pathway. Also suppresses the host basal defense by interacting with and inhibiting SNF1 kinase, a key regulator of cell metabolism implicated in innate antiviral defense. Functionally, inhibits signal transduction by the phytohormone jasmonate, making the infected plant more attractive to aphids, which are the second host to play a role as a dissemination vector. Acts by binding to ubiquitin precursor RPS27A, thereby preventing ubiquitin degradation of JAZ. This is Transcriptional activator protein from Tomato yellow leaf curl Sardinia virus (isolate Spain-1) (TYLCSV).